The sequence spans 144 residues: NADH dehydrogenase [ubiquinone] 1 alpha subcomplex subunit 13 (144 aa).

Ala-2 is modified (N-acetylalanine). Residues 30-51 form a helical membrane-spanning segment; sequence LSGYSMFAVGIGALIFGYWRMM.

This sequence belongs to the complex I NDUFA13 subunit family. As to quaternary structure, complex I is composed of 45 different subunits. Interacts with CARD15, but not with CARD4. Interacts with STAT3, but not with STAT1, STAT2 and STAT5A. Interacts with OLFM4.

The protein resides in the mitochondrion inner membrane. The protein localises to the nucleus. Functionally, accessory subunit of the mitochondrial membrane respiratory chain NADH dehydrogenase (Complex I), that is believed not to be involved in catalysis. Complex I functions in the transfer of electrons from NADH to the respiratory chain. The immediate electron acceptor for the enzyme is believed to be ubiquinone. Involved in the interferon/all-trans-retinoic acid (IFN/RA) induced cell death. This apoptotic activity is inhibited by interaction with viral IRF1. Prevents the transactivation of STAT3 target genes. May play a role in CARD15-mediated innate mucosal responses and serve to regulate intestinal epithelial cell responses to microbes. The chain is NADH dehydrogenase [ubiquinone] 1 alpha subcomplex subunit 13 (Ndufa13) from Mus musculus (Mouse).